Here is a 231-residue protein sequence, read N- to C-terminus: Cytidylate kinase (231 aa).

An ATP-binding site is contributed by Gly18–Ser26.

The protein belongs to the cytidylate kinase family. Type 1 subfamily.

It localises to the cytoplasm. It carries out the reaction CMP + ATP = CDP + ADP. The catalysed reaction is dCMP + ATP = dCDP + ADP. In Streptomyces griseus subsp. griseus (strain JCM 4626 / CBS 651.72 / NBRC 13350 / KCC S-0626 / ISP 5235), this protein is Cytidylate kinase.